Reading from the N-terminus, the 207-residue chain is tRNA (pseudouridine(54)-N(1))-methyltransferase (207 aa).

Residue L137 coordinates S-adenosyl-L-methionine.

This sequence belongs to the methyltransferase superfamily. TrmY family. Homodimer.

The protein resides in the cytoplasm. It catalyses the reaction pseudouridine(54) in tRNA + S-adenosyl-L-methionine = N(1)-methylpseudouridine(54) in tRNA + S-adenosyl-L-homocysteine + H(+). Its function is as follows. Specifically catalyzes the N1-methylation of pseudouridine at position 54 (Psi54) in tRNAs. This is tRNA (pseudouridine(54)-N(1))-methyltransferase from Halorubrum lacusprofundi (strain ATCC 49239 / DSM 5036 / JCM 8891 / ACAM 34).